The chain runs to 384 residues: UPF0284 protein alr0297 (384 aa).

The protein belongs to the UPF0284 family.

The polypeptide is UPF0284 protein alr0297 (Nostoc sp. (strain PCC 7120 / SAG 25.82 / UTEX 2576)).